The sequence spans 130 residues: Protein ApaG (130 aa).

The 125-residue stretch at 3-127 (RAVTRQIEVT…FSLDSPDNKR (125 aa)) folds into the ApaG domain.

In Bradyrhizobium diazoefficiens (strain JCM 10833 / BCRC 13528 / IAM 13628 / NBRC 14792 / USDA 110), this protein is Protein ApaG.